The sequence spans 86 residues: MSDDITSEAQTIAVGQLRAFIERIERLEEEKKTIGDDIKEVYAELKGSGFDSKVVRTIIRLRKKEDHERQEEEAMLQLYMDALGMS.

Belongs to the UPF0335 family.

In Brucella abortus biovar 1 (strain 9-941), this protein is UPF0335 protein BruAb1_1737.